The primary structure comprises 297 residues: PDZ domain-containing protein GIPC3 (297 aa).

Residues 97–177 (EVEVTKTEDA…SQPFTLRLVQ (81 aa)) enclose the PDZ domain.

The protein belongs to the GIPC family. As to expression, expressed in adult lung, brain and testis. In the inner ear, it is expressed in the inner and outer hair cells of the organ of Corti. Also expressed in cochlear spiral ganglion neurons.

Its function is as follows. Required for postnatal maturation of the hair bundle and long-term survival of hair cells and spiral ganglion. The protein is PDZ domain-containing protein GIPC3 (Gipc3) of Mus musculus (Mouse).